The primary structure comprises 83 residues: Putative protein T-ENOL (83 aa).

A disordered region spans residues 1–33; the sequence is MASTPMGNEGEKKSSWPSQAAPSLRGGPASLSR.

This chain is Putative protein T-ENOL, found in Homo sapiens (Human).